A 280-amino-acid chain; its full sequence is Shikimate dehydrogenase (NADP(+)) (280 aa).

Shikimate is bound by residues 20 to 22 and T67; that span reads SLS. Catalysis depends on K71, which acts as the Proton acceptor. Shikimate contacts are provided by N92 and D107. Residues 131 to 135 and G220 each bind NADP(+); that span reads GAGGA. Y222 provides a ligand contact to shikimate. Residue G243 coordinates NADP(+).

Belongs to the shikimate dehydrogenase family. Homodimer.

It carries out the reaction shikimate + NADP(+) = 3-dehydroshikimate + NADPH + H(+). It participates in metabolic intermediate biosynthesis; chorismate biosynthesis; chorismate from D-erythrose 4-phosphate and phosphoenolpyruvate: step 4/7. Functionally, involved in the biosynthesis of the chorismate, which leads to the biosynthesis of aromatic amino acids. Catalyzes the reversible NADPH linked reduction of 3-dehydroshikimate (DHSA) to yield shikimate (SA). This is Shikimate dehydrogenase (NADP(+)) from Maricaulis maris (strain MCS10) (Caulobacter maris).